The following is a 129-amino-acid chain: Small ribosomal subunit protein uS11 (129 aa).

It belongs to the universal ribosomal protein uS11 family. Part of the 30S ribosomal subunit. Interacts with proteins S7 and S18. Binds to IF-3.

In terms of biological role, located on the platform of the 30S subunit, it bridges several disparate RNA helices of the 16S rRNA. Forms part of the Shine-Dalgarno cleft in the 70S ribosome. This chain is Small ribosomal subunit protein uS11, found in Lysinibacillus sphaericus (strain C3-41).